The sequence spans 208 residues: Porimin (208 aa).

The signal sequence occupies residues 1 to 26; it reads MGLGARGAWAALLLGTLQVLALLGAA. Residues 27–166 are Extracellular-facing; it reads HESAAMAASA…EAKKGSKFDT (140 aa). Residues 42 to 57 are compositionally biased toward polar residues; that stretch reads GLPHNSSANSTETLQH. The interval 42–125 is disordered; sequence GLPHNSSANS…PKTTSVSQNT (84 aa). N-linked (GlcNAc...) asparagine glycans are attached at residues asparagine 46, asparagine 50, asparagine 64, asparagine 68, asparagine 83, asparagine 96, and asparagine 106. Polar residues predominate over residues 65-107; sequence ETSNSTVKPPTSVASDSSNTTVTTMKPTAASNTTTPGMVSTNM. Residues 108–122 show a composition bias toward low complexity; it reads TSTTLKSTPKTTSVS. N-linked (GlcNAc...) asparagine glycosylation is found at asparagine 124 and asparagine 138. Residues 167–187 traverse the membrane as a helical segment; that stretch reads GSFVGGIVLTLGVLSILYIGC. Residues 188-208 are Cytoplasmic-facing; the sequence is KMYYSRRGIRYRTIDEHDAII.

The protein belongs to the CD164 family. In terms of tissue distribution, ubiquitous. Not expressed in ovary. Expressed in keratinocytes.

Its subcellular location is the membrane. Its function is as follows. Implicated in oncotic cell death, characterized by cell swelling, organelle swelling, vacuolization and increased membrane permeability. This chain is Porimin (TMEM123), found in Homo sapiens (Human).